The sequence spans 74 residues: UPF0352 protein PM1884 (74 aa).

The protein belongs to the UPF0352 family.

This Pasteurella multocida (strain Pm70) protein is UPF0352 protein PM1884.